The sequence spans 370 residues: 4-hydroxy-3-methylbut-2-en-1-yl diphosphate synthase (flavodoxin) (370 aa).

Cysteine 271, cysteine 274, cysteine 306, and glutamate 313 together coordinate [4Fe-4S] cluster.

It belongs to the IspG family. [4Fe-4S] cluster serves as cofactor.

The catalysed reaction is (2E)-4-hydroxy-3-methylbut-2-enyl diphosphate + oxidized [flavodoxin] + H2O + 2 H(+) = 2-C-methyl-D-erythritol 2,4-cyclic diphosphate + reduced [flavodoxin]. Its pathway is isoprenoid biosynthesis; isopentenyl diphosphate biosynthesis via DXP pathway; isopentenyl diphosphate from 1-deoxy-D-xylulose 5-phosphate: step 5/6. Converts 2C-methyl-D-erythritol 2,4-cyclodiphosphate (ME-2,4cPP) into 1-hydroxy-2-methyl-2-(E)-butenyl 4-diphosphate. This Actinobacillus pleuropneumoniae serotype 5b (strain L20) protein is 4-hydroxy-3-methylbut-2-en-1-yl diphosphate synthase (flavodoxin).